Here is a 682-residue protein sequence, read N- to C-terminus: Potassium-transporting ATPase ATP-binding subunit (682 aa).

The next 4 membrane-spanning stretches (helical) occupy residues 34-54 (PVMF…LAMV), 58-78 (IAGS…TVLF), 219-239 (IALT…TATL), and 254-274 (VLVA…LSAI). Asp307 (4-aspartylphosphate intermediate) is an active-site residue. ATP is bound by residues Asp344, Glu348, 377-384 (FTAQSRMS), and Lys395. Positions 518 and 522 each coordinate Mg(2+). Helical transmembrane passes span 588–608 (FAII…LNVM), 616–636 (AILS…PLAL), and 662–682 (LVVP…LGLA).

The protein belongs to the cation transport ATPase (P-type) (TC 3.A.3) family. Type IA subfamily. The system is composed of three essential subunits: KdpA, KdpB and KdpC.

The protein localises to the cell inner membrane. It catalyses the reaction K(+)(out) + ATP + H2O = K(+)(in) + ADP + phosphate + H(+). Functionally, part of the high-affinity ATP-driven potassium transport (or Kdp) system, which catalyzes the hydrolysis of ATP coupled with the electrogenic transport of potassium into the cytoplasm. This subunit is responsible for energy coupling to the transport system and for the release of the potassium ions to the cytoplasm. The protein is Potassium-transporting ATPase ATP-binding subunit of Salmonella typhimurium (strain LT2 / SGSC1412 / ATCC 700720).